Reading from the N-terminus, the 207-residue chain is Vascular endothelial growth factor B (207 aa).

An N-terminal signal peptide occupies residues 1-21; sequence MSPLLRRLLLAVLLQLAPAQA. 3 disulfide bridges follow: cysteine 47/cysteine 89, cysteine 78/cysteine 122, and cysteine 82/cysteine 124. Over residues 124–139 the composition is skewed to basic and acidic residues; sequence CRPKKRESAVKPDRAS. The segment at 124–207 is disordered; the sequence is CRPKKRESAV…AASSVVKGGA (84 aa). Over residues 174-201 the composition is skewed to low complexity; sequence PSAHAAPSAASALTPGPATAAADAAASS.

The protein belongs to the PDGF/VEGF growth factor family. As to quaternary structure, homodimer; disulfide-linked. Can also form heterodimer with VEGF. VEGF-B186 is O-glycosylated.

Its subcellular location is the secreted. Its function is as follows. Growth factor for endothelial cells. VEGF-B167 binds heparin and neuropilin-1 whereas the binding to neuropilin-1 of VEGF-B186 is regulated by proteolysis. The chain is Vascular endothelial growth factor B (VEGFB) from Bos taurus (Bovine).